A 121-amino-acid chain; its full sequence is UPF0212 protein VNG_0879C (121 aa).

It belongs to the UPF0212 family.

This Halobacterium salinarum (strain ATCC 700922 / JCM 11081 / NRC-1) (Halobacterium halobium) protein is UPF0212 protein VNG_0879C.